A 517-amino-acid polypeptide reads, in one-letter code: MTKNIHDQRILILDFGSQYTQLVARRIREIGVYCELWSWDVEEADIREFNPDGIILSGGPESVTEENSPRAPQYVFDSGVPVFGICYGMQTMAEQLGGKVATSTEREFGYAAVQVTGESALFADLETTQDVWMSHGDKVVEIPADFTKIAETDTCPYAAMANEEKKYYGVQFHPEVTHTKNGLKMLENFVLNACGCEGLWTSASIIEDAVARIKEQVGDDEVILGLSGGVDSSVVAMLAHRAIGDKLTCVFVDNGLLRLNEGEQVMEMFGDQFGLNIIKVDAEDRFLDALEGEAEPEAKRKIIGHVFVDIFDEESKKLKNAKWLAQGTIYPDVIESAASKTGKAHVIKSHHNVGGLPDDMEMGLVEPLRELFKDEVRKIGLELGLPYNMLYRHPFPGPGLGVRVLGEVKKEYCDLLRRADAIFIEELHAADLYHKVSQAFTVFLPVRSVGVMGDGRKYDWVVSLRAVETIDFMTAHWAHLPYDFLGKVSNRIINEVNGISRVVYDISGKPPATIEWE.

A Glutamine amidotransferase type-1 domain is found at Arg-9–Leu-199. Cys-86 (nucleophile) is an active-site residue. Catalysis depends on residues His-173 and Glu-175. Residues Trp-200–Arg-392 enclose the GMPS ATP-PPase domain. Ser-227–Ser-233 contributes to the ATP binding site.

Homodimer.

The catalysed reaction is XMP + L-glutamine + ATP + H2O = GMP + L-glutamate + AMP + diphosphate + 2 H(+). It participates in purine metabolism; GMP biosynthesis; GMP from XMP (L-Gln route): step 1/1. Its function is as follows. Catalyzes the synthesis of GMP from XMP. In Vibrio atlanticus (strain LGP32) (Vibrio splendidus (strain Mel32)), this protein is GMP synthase [glutamine-hydrolyzing].